Consider the following 20-residue polypeptide: Disintegrin (20 aa).

In terms of domain architecture, Disintegrin spans 1-20 (EAGEECDCGTPENPCCDAAT). Disulfide bonds link Cys6/Cys15 and Cys8/Cys16.

Belongs to the venom metalloproteinase (M12B) family. P-II subfamily. P-IIa sub-subfamily. In terms of assembly, monomer. In terms of tissue distribution, expressed by the venom gland.

It is found in the secreted. Inhibits fibrinogen interaction with platelets. Acts by binding to alpha-IIb/beta-3 (ITGA2B/ITGB3) on the platelet surface and inhibits aggregation induced by ADP, thrombin, platelet-activating factor and collagen. The sequence is that of Disintegrin from Bothrops fonsecai (Fonseca's lancehead).